The chain runs to 177 residues: Ubiquinol-cytochrome c reductase iron-sulfur subunit (177 aa).

The helical transmembrane segment at 18 to 38 (MVLTASSVAAIGAVCTLWPLV) threads the bilayer. The Rieske domain occupies 88–175 (ARAVKMSELI…YTFISDKKIR (88 aa)). Residues C120, H122, C139, and H142 each contribute to the [2Fe-2S] cluster site. An intrachain disulfide couples C125 to C141.

This sequence belongs to the Rieske iron-sulfur protein family. The main subunits of complex b-c1 are: cytochrome b, cytochrome c1 and the Rieske protein. The cofactor is [2Fe-2S] cluster.

It is found in the cell membrane. It carries out the reaction a quinol + 2 Fe(III)-[cytochrome c](out) = a quinone + 2 Fe(II)-[cytochrome c](out) + 2 H(+)(out). In terms of biological role, component of the ubiquinol-cytochrome c reductase complex (complex III or cytochrome b-c1 complex), which is a respiratory chain that generates an electrochemical potential coupled to ATP synthesis. This is Ubiquinol-cytochrome c reductase iron-sulfur subunit (petA) from Rickettsia conorii (strain ATCC VR-613 / Malish 7).